The sequence spans 257 residues: Dihydroorotate dehydrogenase B (NAD(+)), electron transfer subunit (257 aa).

One can recognise an FAD-binding FR-type domain in the interval 2–102; it reads MKQEQMTVVR…LGPLGNGFPL (101 aa). Residues 53-56, 70-72, and 77-78 each bind FAD; these read RPLS, IYR, and GT. The [2Fe-2S] cluster site is built by Cys221, Cys226, Cys229, and Cys244.

This sequence belongs to the PyrK family. As to quaternary structure, heterotetramer of 2 PyrK and 2 PyrD type B subunits. [2Fe-2S] cluster is required as a cofactor. It depends on FAD as a cofactor.

It participates in pyrimidine metabolism; UMP biosynthesis via de novo pathway; orotate from (S)-dihydroorotate (NAD(+) route): step 1/1. Its function is as follows. Responsible for channeling the electrons from the oxidation of dihydroorotate from the FMN redox center in the PyrD type B subunit to the ultimate electron acceptor NAD(+). This is Dihydroorotate dehydrogenase B (NAD(+)), electron transfer subunit from Geobacillus sp. (strain WCH70).